The sequence spans 188 residues: Elongation factor P-like protein (188 aa).

It belongs to the elongation factor P family.

The polypeptide is Elongation factor P-like protein (Vibrio cholerae serotype O1 (strain ATCC 39541 / Classical Ogawa 395 / O395)).